The following is a 215-amino-acid chain: Orotate phosphoribosyltransferase (215 aa).

Residue K26 coordinates 5-phospho-alpha-D-ribose 1-diphosphate. 34-35 (FF) contributes to the orotate binding site. Residues 72–73 (YK), R99, K100, K103, H105, and 124–132 (DDVITAGTA) each bind 5-phospho-alpha-D-ribose 1-diphosphate. Residues T128 and R156 each coordinate orotate.

Belongs to the purine/pyrimidine phosphoribosyltransferase family. PyrE subfamily. In terms of assembly, homodimer. Mg(2+) is required as a cofactor.

It carries out the reaction orotidine 5'-phosphate + diphosphate = orotate + 5-phospho-alpha-D-ribose 1-diphosphate. It functions in the pathway pyrimidine metabolism; UMP biosynthesis via de novo pathway; UMP from orotate: step 1/2. In terms of biological role, catalyzes the transfer of a ribosyl phosphate group from 5-phosphoribose 1-diphosphate to orotate, leading to the formation of orotidine monophosphate (OMP). The chain is Orotate phosphoribosyltransferase from Yersinia pseudotuberculosis serotype O:1b (strain IP 31758).